Here is a 265-residue protein sequence, read N- to C-terminus: MAVITMKQLLEAGVHFGHQTRRWNPKMKKYIFTERNGIYIIDLQKTVKLIDDAYDFIKDAASDDGVVLFVGTKKQAQEAIEEEAKRAGQYYVNHRWLGGTLTNWNTIQKRIKKLKEIKAMAEDGTFDRLPKKEVALLIKQRDRLEKFLGGIEDMPRIPDVLFIVDPRKERIAVKEAQKLNIPIVAMVDTNADPDEIDVKIPSNDDAIRAVRLITSKMADAIIEGRQGEDDAPVTEDTFENTDDQVDSIEDIVEVVEGDNDSTDAE.

The protein belongs to the universal ribosomal protein uS2 family.

This is Small ribosomal subunit protein uS2 from Ligilactobacillus salivarius (strain UCC118) (Lactobacillus salivarius).